Here is a 691-residue protein sequence, read N- to C-terminus: Protein-glutamine gamma-glutamyltransferase E (691 aa).

A Phosphotyrosine modification is found at tyrosine 110. Threonine 111 carries the phosphothreonine modification. Ca(2+)-binding residues include alanine 221, asparagine 224, asparagine 226, and aspartate 227. The active site involves cysteine 272. Positions 301, 303, 305, 307, and 324 each coordinate Ca(2+). Active-site residues include histidine 330 and aspartate 353. The Ca(2+) site is built by asparagine 393, threonine 414, glutamate 442, and glutamate 447.

The protein belongs to the transglutaminase superfamily. Transglutaminase family. Consists of two polypeptide chains, which are synthesized as a precursor form of a single polypeptide. Ca(2+) serves as cofactor. Activated by proteolytic processing. In vitro activation is commonly achieved by cleavage with dispase, a neutral bacterial protease. Physiological activation may be catalyzed by CTSL and, to a lesser extent, by CTSS.

It localises to the cytoplasm. It catalyses the reaction L-glutaminyl-[protein] + L-lysyl-[protein] = [protein]-L-lysyl-N(6)-5-L-glutamyl-[protein] + NH4(+). Catalyzes the calcium-dependent formation of isopeptide cross-links between glutamine and lysine residues in various proteins, as well as the conjugation of polyamines to proteins. Involved in the formation of the cornified envelope (CE), a specialized component consisting of covalent cross-links of proteins beneath the plasma membrane of terminally differentiated keratinocytes. Catalyzes small proline-rich proteins and LOR cross-linking to form small interchain oligomers, which are further cross-linked by TGM1 onto the growing CE scaffold. In hair follicles, involved in cross-linking structural proteins to hardening the inner root sheath. In Bos taurus (Bovine), this protein is Protein-glutamine gamma-glutamyltransferase E (TGM3).